The primary structure comprises 1119 residues: Ubiquitin-associated protein 2 (1119 aa).

The disordered stretch occupies residues 1–26; it reads MMTSVSSDHCRGAREKPQISAAQSTQ. Residues 8–17 are compositionally biased toward basic and acidic residues; that stretch reads DHCRGAREKP. The UBA domain maps to 48–92; it reads KNDSDFEAKVKQLMEVTGKNQDECIVALHDCNGDVNKAINILLEG. Positions 105-130 form a coiled coil; it reads KKKNFAKENSENKENREKKSEKESSR. Residues 110 to 130 show a composition bias toward basic and acidic residues; sequence AKENSENKENREKKSEKESSR. Disordered stretches follow at residues 110–202, 385–476, 622–736, 853–905, 937–966, 982–1020, and 1082–1119; these read AKEN…YSDS, LGQF…SPST, VHNR…SSHQ, RDGS…VNPA, SAKQHGVNLSTPTPPFQQASGYGQHGYSTG, GGYAGSSQAPNKSAGSGPGKGVSVSSSTTGLPDMTGSVY, and HLPQDAQSGSGQRSQPSSLQPKSQASKPAYGNSPYWTN. Arg166 carries the post-translational modification Omega-N-methylarginine. The span at 168–182 shows a compositional bias: basic residues; sequence KRARGRGFGRGRGRG. Positions 389–407 are enriched in low complexity; the sequence is TTTPSTQQNSTSHPTTTTS. Phosphoserine occurs at positions 432, 439, 473, and 630. The segment covering 435 to 447 has biased composition (low complexity); that stretch reads LSQLSQRQQHQSQ. Polar residues predominate over residues 651–662; sequence SQQTLDTPKTTG. A compositionally biased stretch (low complexity) spans 663–678; that stretch reads PPSALPSVSSLPSTTS. Residues 679 to 694 are compositionally biased toward polar residues; that stretch reads CTALLPSTSQHTGDLT. 2 stretches are compositionally biased toward low complexity: residues 695–736 and 874–900; these read SSPL…SSHQ and SASPAPATTPAQPQQSQSQTHHTAQQP. Positions 943-957 are enriched in polar residues; it reads VNLSTPTPPFQQASG. 2 stretches are compositionally biased toward low complexity: residues 1002-1011 and 1088-1102; these read GVSVSSSTTG and QSGSGQRSQPSSLQP.

May interact with ANXA2.

The protein localises to the nucleus. The protein resides in the chromosome. It is found in the cytoplasm. Recruits the ubiquitination machinery to RNA polymerase II for polyubiquitination, removal and degradation, when the transcription-coupled nucleotide excision repair (TC-NER) machinery fails to resolve DNA damage. May promote the degradation of ANXA2. The sequence is that of Ubiquitin-associated protein 2 from Homo sapiens (Human).